The chain runs to 217 residues: 3,4-dihydroxy-2-butanone 4-phosphate synthase (217 aa).

D-ribulose 5-phosphate is bound by residues 37-38 (RE), Asp42, 150-154 (RQGHT), and Glu174. Glu38 is a Mg(2+) binding site. His153 provides a ligand contact to Mg(2+).

It belongs to the DHBP synthase family. Homodimer. The cofactor is Mg(2+). Mn(2+) serves as cofactor.

The catalysed reaction is D-ribulose 5-phosphate = (2S)-2-hydroxy-3-oxobutyl phosphate + formate + H(+). It participates in cofactor biosynthesis; riboflavin biosynthesis; 2-hydroxy-3-oxobutyl phosphate from D-ribulose 5-phosphate: step 1/1. In terms of biological role, catalyzes the conversion of D-ribulose 5-phosphate to formate and 3,4-dihydroxy-2-butanone 4-phosphate. In Photorhabdus laumondii subsp. laumondii (strain DSM 15139 / CIP 105565 / TT01) (Photorhabdus luminescens subsp. laumondii), this protein is 3,4-dihydroxy-2-butanone 4-phosphate synthase.